Here is a 443-residue protein sequence, read N- to C-terminus: ATP-dependent protease ATPase subunit HslU (443 aa).

Residues Ile20, 62-67 (GVGKTE), Asp255, Glu321, and Arg393 each bind ATP.

The protein belongs to the ClpX chaperone family. HslU subfamily. In terms of assembly, a double ring-shaped homohexamer of HslV is capped on each side by a ring-shaped HslU homohexamer. The assembly of the HslU/HslV complex is dependent on binding of ATP.

The protein localises to the cytoplasm. Its function is as follows. ATPase subunit of a proteasome-like degradation complex; this subunit has chaperone activity. The binding of ATP and its subsequent hydrolysis by HslU are essential for unfolding of protein substrates subsequently hydrolyzed by HslV. HslU recognizes the N-terminal part of its protein substrates and unfolds these before they are guided to HslV for hydrolysis. The polypeptide is ATP-dependent protease ATPase subunit HslU (Helicobacter pylori (strain P12)).